Reading from the N-terminus, the 398-residue chain is Dihydroorotase (398 aa).

Residues His58 and His60 each coordinate Zn(2+). Substrate-binding positions include 60 to 62 and Asn92; that span reads HFR. Positions 151, 178, and 215 each coordinate Zn(2+). Asn256 lines the substrate pocket. Zn(2+) is bound at residue Asp283. Residue Asp283 is part of the active site. Substrate-binding positions include His287 and 297–298; that span reads PG.

The protein belongs to the metallo-dependent hydrolases superfamily. DHOase family. Class I DHOase subfamily. The cofactor is Zn(2+).

The catalysed reaction is (S)-dihydroorotate + H2O = N-carbamoyl-L-aspartate + H(+). Its pathway is pyrimidine metabolism; UMP biosynthesis via de novo pathway; (S)-dihydroorotate from bicarbonate: step 3/3. Its function is as follows. Catalyzes the reversible cyclization of carbamoyl aspartate to dihydroorotate. The sequence is that of Dihydroorotase from Clostridium botulinum (strain Eklund 17B / Type B).